Reading from the N-terminus, the 482-residue chain is C3a anaphylatoxin chemotactic receptor (482 aa).

The Extracellular segment spans residues 1-23; the sequence is MASFSAETNSTDLLSQPWNEPPV. N9 carries N-linked (GlcNAc...) asparagine glycosylation. Residues 24 to 46 traverse the membrane as a helical segment; that stretch reads ILSMVILSLTFLLGLPGNGLVLW. Over 47–57 the chain is Cytoplasmic; the sequence is VAGLKMQRTVN. A helical transmembrane segment spans residues 58–80; the sequence is TIWFLHLTLADLLCCLSLPFSLA. Residues 81-96 are Extracellular-facing; sequence HLALQGQWPYGRFLCK. An intrachain disulfide couples C95 to C172. A helical membrane pass occupies residues 97-118; that stretch reads LIPSIIVLNMFASVFLLTAISL. The Cytoplasmic portion of the chain corresponds to 119–139; that stretch reads DRCLVVFKPIWCQNHRNVGMA. A helical membrane pass occupies residues 140 to 160; it reads CSICGCIWVVAFVMCIPVFVY. The Extracellular segment spans residues 161–340; it reads REIFTTDNHN…TPLVAITITR (180 aa). A sulfotyrosine mark is found at Y174 and Y184. N194 carries N-linked (GlcNAc...) asparagine glycosylation. O-linked (GalNAc...) serine glycosylation is present at S266. Y318 carries the post-translational modification Sulfotyrosine. A helical transmembrane segment spans residues 341–360; the sequence is LVVGFLLPSVIMIACYSFIV. The Cytoplasmic segment spans residues 361–377; sequence FRMQRGRFAKSQSKTFR. Residues 378–400 traverse the membrane as a helical segment; sequence VAVVVVAVFLVCWTPYHIFGVLS. Residues 401 to 417 are Extracellular-facing; that stretch reads LLTDPETPLGKTLMSWD. A helical membrane pass occupies residues 418–438; sequence HVCIALASANSCFNPFLYALL. Residues 439 to 482 are Cytoplasmic-facing; it reads GKDFRKKARQSIQGILEAAFSEELTRSTHCPSNNVISERNSTTV. S459 is modified (phosphoserine). T463 bears the Phosphothreonine mark.

The protein belongs to the G-protein coupled receptor 1 family. Interacts with VGF-derived peptide TLQP-21. Post-translationally, among the sulfation sites Tyr-174 is essential for binding of C3a anaphylatoxin. O-glycosylated. As to expression, widely expressed in several differentiated hematopoietic cell lines, in the lung, spleen, ovary, placenta, small intestine, throughout the brain, heart, and endothelial cells. Mostly expressed in lymphoid tissues.

It localises to the cell membrane. Its function is as follows. Receptor for the chemotactic and inflammatory peptide anaphylatoxin C3a. This receptor stimulates chemotaxis, granule enzyme release and superoxide anion production. The chain is C3a anaphylatoxin chemotactic receptor (C3AR1) from Homo sapiens (Human).